A 440-amino-acid polypeptide reads, in one-letter code: Chromosome partition protein MukF (440 aa).

A leucine-zipper region spans residues 208-236 (LSETSGTLRELQDTLEAAGDKLQANLLRI).

The protein belongs to the MukF family. As to quaternary structure, interacts, and probably forms a ternary complex, with MukE and MukB via its C-terminal region. The complex formation is stimulated by calcium or magnesium. It is required for an interaction between MukE and MukB.

Its subcellular location is the cytoplasm. The protein resides in the nucleoid. Functionally, involved in chromosome condensation, segregation and cell cycle progression. May participate in facilitating chromosome segregation by condensation DNA from both sides of a centrally located replisome during cell division. Not required for mini-F plasmid partitioning. Probably acts via its interaction with MukB and MukE. Overexpression results in anucleate cells. It has a calcium binding activity. The sequence is that of Chromosome partition protein MukF from Escherichia coli O9:H4 (strain HS).